Reading from the N-terminus, the 478-residue chain is GTPase Obg (478 aa).

An Obg domain is found at 2–159 (TTFVDRVELH…RDIVLELKTV (158 aa)). The interval 61–87 (HHSPHRKATNGQPGAGDNRSGKDGQDL) is disordered. Residues 160-330 (ADVALVGYPS…LSFALAGIIA (171 aa)) enclose the OBG-type G domain. GTP is bound by residues 166 to 173 (GYPSAGKS), 191 to 195 (FTTLV), 212 to 215 (DVPG), 282 to 285 (NKVD), and 311 to 313 (SAI). Mg(2+)-binding residues include serine 173 and threonine 193. Residues 348 to 430 (PRAVDDAGFT…ENAVVFDWEP (83 aa)) form the OCT domain. Residues 436 to 478 (AEMLGRRGEDHRLEEPRPAAQRRRERDAERDDAEKEYDEFDPF) form a disordered region. The segment covering 439 to 468 (LGRRGEDHRLEEPRPAAQRRRERDAERDDA) has biased composition (basic and acidic residues). Residues 469–478 (EKEYDEFDPF) show a composition bias toward acidic residues.

This sequence belongs to the TRAFAC class OBG-HflX-like GTPase superfamily. OBG GTPase family. In terms of assembly, monomer. It depends on Mg(2+) as a cofactor.

It is found in the cytoplasm. Its function is as follows. An essential GTPase which binds GTP, GDP and possibly (p)ppGpp with moderate affinity, with high nucleotide exchange rates and a fairly low GTP hydrolysis rate. Plays a role in control of the cell cycle, stress response, ribosome biogenesis and in those bacteria that undergo differentiation, in morphogenesis control. In Streptomyces griseus subsp. griseus (strain JCM 4626 / CBS 651.72 / NBRC 13350 / KCC S-0626 / ISP 5235), this protein is GTPase Obg.